A 199-amino-acid polypeptide reads, in one-letter code: 3-isopropylmalate dehydratase small subunit (199 aa).

This sequence belongs to the LeuD family. LeuD type 1 subfamily. As to quaternary structure, heterodimer of LeuC and LeuD.

It catalyses the reaction (2R,3S)-3-isopropylmalate = (2S)-2-isopropylmalate. It participates in amino-acid biosynthesis; L-leucine biosynthesis; L-leucine from 3-methyl-2-oxobutanoate: step 2/4. Its function is as follows. Catalyzes the isomerization between 2-isopropylmalate and 3-isopropylmalate, via the formation of 2-isopropylmaleate. This chain is 3-isopropylmalate dehydratase small subunit, found in Aeromonas hydrophila subsp. hydrophila (strain ATCC 7966 / DSM 30187 / BCRC 13018 / CCUG 14551 / JCM 1027 / KCTC 2358 / NCIMB 9240 / NCTC 8049).